The primary structure comprises 345 residues: Type II restriction enzyme HgiCI (345 aa).

It carries out the reaction Endonucleolytic cleavage of DNA to give specific double-stranded fragments with terminal 5'-phosphates.. Its function is as follows. A P subtype restriction enzyme that recognizes the double-stranded sequence 5'-GGYRCC-3' and cleaves after G-1. This is Type II restriction enzyme HgiCI (hgiCIR) from Herpetosiphon aurantiacus (Herpetosiphon giganteus).